Here is a 248-residue protein sequence, read N- to C-terminus: 1-(5-phosphoribosyl)-5-[(5-phosphoribosylamino)methylideneamino] imidazole-4-carboxamide isomerase (248 aa).

Asp17 acts as the Proton acceptor in catalysis. Catalysis depends on Asp136, which acts as the Proton donor.

It belongs to the HisA/HisF family.

The protein localises to the cytoplasm. It catalyses the reaction 1-(5-phospho-beta-D-ribosyl)-5-[(5-phospho-beta-D-ribosylamino)methylideneamino]imidazole-4-carboxamide = 5-[(5-phospho-1-deoxy-D-ribulos-1-ylimino)methylamino]-1-(5-phospho-beta-D-ribosyl)imidazole-4-carboxamide. Its pathway is amino-acid biosynthesis; L-histidine biosynthesis; L-histidine from 5-phospho-alpha-D-ribose 1-diphosphate: step 4/9. This Arthrobacter sp. (strain FB24) protein is 1-(5-phosphoribosyl)-5-[(5-phosphoribosylamino)methylideneamino] imidazole-4-carboxamide isomerase.